We begin with the raw amino-acid sequence, 1673 residues long: Calmodulin-binding transcription activator 1 (1673 aa).

The CG-1 DNA-binding region spans 63-188 (KCSSLPKERH…YLNVPAIEDC (126 aa)). Residues 112–119 (RKKVKYRK) carry the Nuclear localization signal motif. The tract at residues 283-375 (HRIISPKVEP…LNSDPDMVDS (93 aa)) is disordered. Over residues 302-313 (EVQHNDVSEGKH) the composition is skewed to basic and acidic residues. Residues 337 to 367 (HQSSTEVSSTNQVEVPDTTQSSPVSISSGLN) show a composition bias toward polar residues. In terms of domain architecture, IPT/TIG spans 875-953 (DYSPEWSYPE…ISNSVVFEYK (79 aa)). The interval 990 to 1021 (MAEMTGSQQHKQASGGGSSGGGSGSGNGGSQA) is disordered. Gly residues predominate over residues 1003–1018 (SGGGSSGGGSGSGNGG). 3 ANK repeats span residues 1064 to 1093 (RGMT…KHAD), 1109 to 1129 (FSCT…AVVL), and 1143 to 1172 (LGRL…DEQA). 2 disordered regions span residues 1215–1246 (ASTN…PKKH) and 1264–1317 (ALSL…GSQP). The segment covering 1273-1289 (RKQSPSSKQSVPETLSP) has biased composition (polar residues). 3 IQ domains span residues 1547–1576 (QEVA…AAIL), 1577–1599 (IQSK…AAVL), and 1600–1622 (IQKY…TAVI).

It belongs to the CAMTA family. May interact with calmodulin. In terms of tissue distribution, normally expressed in non-neoplastic adult central nervous system tissues: detected in whole brain, cerebellum, brain cortex, occipital lobe, frontal lobe, temporal lobe, putamen. Expression levels are low in oligodendroglial tumors, and are reduced by half in oligodendroglioma and astrocytoma cases with 1p loss of heterozygosity. Detected in neuroblastic-type cultured neuroblastoma cells. Expressed in heart and kidney.

It is found in the nucleus. The protein localises to the cytoplasm. In terms of biological role, transcriptional activator. The protein is Calmodulin-binding transcription activator 1 of Homo sapiens (Human).